We begin with the raw amino-acid sequence, 595 residues long: Aspartate--tRNA ligase (595 aa).

Glutamate 176 contacts L-aspartate. An aspartate region spans residues 200-203 (QIFK). Arginine 222 is a binding site for L-aspartate. ATP is bound by residues 222-224 (RDE) and glutamine 231. Residue histidine 450 participates in L-aspartate binding. Glutamate 484 lines the ATP pocket. Arginine 491 lines the L-aspartate pocket. 536–539 (GLDR) serves as a coordination point for ATP.

This sequence belongs to the class-II aminoacyl-tRNA synthetase family. Type 1 subfamily. In terms of assembly, homodimer.

It localises to the cytoplasm. It catalyses the reaction tRNA(Asp) + L-aspartate + ATP = L-aspartyl-tRNA(Asp) + AMP + diphosphate. In terms of biological role, catalyzes the attachment of L-aspartate to tRNA(Asp) in a two-step reaction: L-aspartate is first activated by ATP to form Asp-AMP and then transferred to the acceptor end of tRNA(Asp). This is Aspartate--tRNA ligase from Halalkalibacterium halodurans (strain ATCC BAA-125 / DSM 18197 / FERM 7344 / JCM 9153 / C-125) (Bacillus halodurans).